The sequence spans 287 residues: Myogenin (287 aa).

A phosphoserine; by CaMK2G mark is found at Ser77 and Ser79. One can recognise a bHLH domain in the interval 81–132 (DRRRAATLREKRRLKKVNEAFEALKRSTLLNPNQRLPKVEILRSAIQYIERL). Thr87 carries the phosphothreonine; by CaMK2G modification.

As to quaternary structure, homodimer and heterodimer with E12; heterodimerization enhances MYOG DNA-binding and transcriptional activities. Interacts with SMARCA4/BRG1/BAF190A. Interacts (via C-terminal region) with SSRP1 and SUPT16H; the interaction is indicative of an interaction with the FACT complex. Interacts with CSRP3. In terms of processing, phosphorylated by CAMK2G on threonine and serine amino acids in a muscle activity-dependent manner. Phosphorylation of Thr-87 impairs both DNA-binding and trans-activation functions in contracting muscles. As to expression, expressed in muscle (at protein level).

Its subcellular location is the nucleus. In terms of biological role, acts as a transcriptional activator that promotes transcription of muscle-specific target genes and plays a role in muscle differentiation, cell cycle exit and muscle atrophy. Essential for the development of functional embryonic skeletal fiber muscle differentiation. However is dispensable for postnatal skeletal muscle growth; phosphorylation by CAMK2G inhibits its transcriptional activity in respons to muscle activity. Required for the recruitment of the FACT complex to muscle-specific promoter regions, thus promoting gene expression initiation. During terminal myoblast differentiation, plays a role as a strong activator of transcription at loci with an open chromatin structure previously initiated by MYOD1. Together with MYF5 and MYOD1, co-occupies muscle-specific gene promoter core regions during myogenesis. Also cooperates with myocyte-specific enhancer factor MEF2D and BRG1-dependent recruitment of SWI/SNF chromatin-remodeling enzymes to alter chromatin structure at myogenic late gene promoters. Facilitates cell cycle exit during terminal muscle differentiation through the up-regulation of miR-20a expression, which in turn represses genes involved in cell cycle progression. Binds to the E-box containing (E1) promoter region of the miR-20a gene. Also plays a role in preventing reversal of muscle cell differentiation. Contributes to the atrophy-related gene expression in adult denervated muscles. Induces fibroblasts to differentiate into myoblasts. The chain is Myogenin (Myog) from Rattus norvegicus (Rat).